The following is an 83-amino-acid chain: Cell division topological specificity factor (83 aa).

Belongs to the MinE family.

Functionally, prevents the cell division inhibition by proteins MinC and MinD at internal division sites while permitting inhibition at polar sites. This ensures cell division at the proper site by restricting the formation of a division septum at the midpoint of the long axis of the cell. In Buchnera aphidicola subsp. Acyrthosiphon pisum (strain 5A), this protein is Cell division topological specificity factor.